Reading from the N-terminus, the 889-residue chain is 97 kDa heat shock protein (889 aa).

Disordered regions lie at residues 504–622 (EDAM…ATTD) and 812–889 (FVCD…MELD). Over residues 549 to 585 (SADKEEQADNGSKETSKDSKDQTSESSKSDKESKDQN) the composition is skewed to basic and acidic residues. Polar residues predominate over residues 586 to 597 (SEGSKSDNSSTE). Residues 869 to 889 (ASKEGETKPDETKPDVEMELD) show a composition bias toward basic and acidic residues.

Belongs to the heat shock protein 70 family.

Cell surface recognition protein that binds acrosome-reacted sperm and thereby mediates binding and subsequent fusion of the sperm and egg. In Strongylocentrotus purpuratus (Purple sea urchin), this protein is 97 kDa heat shock protein.